Reading from the N-terminus, the 105-residue chain is Putative zinc finger protein 861 (105 aa).

A C2H2-type zinc finger spans residues Y75–H97.

This is Putative zinc finger protein 861 (ZNF861P) from Homo sapiens (Human).